The sequence spans 332 residues: Delta-aminolevulinic acid dehydratase (332 aa).

Lysine 202 serves as the catalytic Schiff-base intermediate with substrate. Positions 212 and 225 each coordinate 5-aminolevulinate. Residue lysine 256 is the Schiff-base intermediate with substrate of the active site. 2 residues coordinate 5-aminolevulinate: serine 282 and tyrosine 321.

It belongs to the ALAD family. Homohexamer.

It catalyses the reaction 2 5-aminolevulinate = porphobilinogen + 2 H2O + H(+). It functions in the pathway porphyrin-containing compound metabolism; protoporphyrin-IX biosynthesis; coproporphyrinogen-III from 5-aminolevulinate: step 1/4. Functionally, catalyzes an early step in the biosynthesis of tetrapyrroles. Binds two molecules of 5-aminolevulinate per subunit, each at a distinct site, and catalyzes their condensation to form porphobilinogen. In Rhodobacter capsulatus (Rhodopseudomonas capsulata), this protein is Delta-aminolevulinic acid dehydratase (hemB).